The sequence spans 570 residues: Formate--tetrahydrofolate ligase (570 aa).

Position 65–72 (65–72) interacts with ATP; the sequence is TPHGEGKT.

Belongs to the formate--tetrahydrofolate ligase family.

The enzyme catalyses (6S)-5,6,7,8-tetrahydrofolate + formate + ATP = (6R)-10-formyltetrahydrofolate + ADP + phosphate. The protein operates within one-carbon metabolism; tetrahydrofolate interconversion. This chain is Formate--tetrahydrofolate ligase, found in Shewanella putrefaciens (strain CN-32 / ATCC BAA-453).